The chain runs to 412 residues: Divalent metal cation transporter MntH (412 aa).

Residues 1-19 (MTNYRVESSSGRAARKMRL) lie on the Cytoplasmic side of the membrane. A helical transmembrane segment spans residues 20-39 (ALMGPAFIAAIGYIDPGNFA). Residues 40 to 51 (TNIQAGASFGYQ) are Periplasmic-facing. A helical membrane pass occupies residues 52 to 71 (LLWVVVWANLMAMLIQILSA). At 72–95 (KLGIATGKNLAEQIRDHYPRPFVW) the chain is on the cytoplasmic side. A helical transmembrane segment spans residues 96 to 118 (FYWVQAEIIAMATDLAEFIGAAI). At 119 to 125 (GFKLILG) the chain is on the periplasmic side. The helical transmembrane segment at 126-145 (VSLLQGAVLTGIATFLILML) threads the bilayer. Topologically, residues 146–155 (QRRGQKPLEK) are cytoplasmic. The chain crosses the membrane as a helical span at residues 156–175 (VIGGLLLFVAAAYIVELIFS). Topologically, residues 176 to 196 (QPNLAQLGKGMVIPSLPTSEA) are periplasmic. A helical transmembrane segment spans residues 197 to 220 (VFLAAGVLGATIMPHVIYLHSSLT). Over 221–238 (QHLHGGSRQQRYSATKWD) the chain is Cytoplasmic. The chain crosses the membrane as a helical span at residues 239–258 (VAIAMTIAGFVNLAMMATAA). Over 259–276 (AAFHFSGHTGVADLDEAY) the chain is Periplasmic. A helical transmembrane segment spans residues 277–297 (LTLQPLLSHAAATVFGLSLVA). Residues 298–327 (AGLSSTVVGTLAGQVVMQGFIRFHIPLWVR) are Cytoplasmic-facing. Residues 328-344 (RTVTMLPSFIVILMGLD) form a helical membrane-spanning segment. Residues 345-350 (PTRILV) are Periplasmic-facing. Residues 351–370 (MSQVLLSFGIALALVPLLIF) traverse the membrane as a helical segment. Residues 371–387 (TSDSKLMGDLVNSKRVK) lie on the Cytoplasmic side of the membrane. The chain crosses the membrane as a helical span at residues 388–406 (QTGWVIVVLVVALNIWLLV). The Periplasmic portion of the chain corresponds to 407-412 (GTALGL).

This sequence belongs to the NRAMP family.

The protein resides in the cell inner membrane. Its function is as follows. H(+)-stimulated, divalent metal cation uptake system. In Escherichia coli O127:H6 (strain E2348/69 / EPEC), this protein is Divalent metal cation transporter MntH.